The sequence spans 177 residues: Protein PrsK (177 aa).

An N-terminal signal peptide occupies residues 1 to 21 (MIKSTGALLLFAALSAGQAMA).

Its subcellular location is the fimbrium. The sequence is that of Protein PrsK (prsK) from Escherichia coli.